Consider the following 198-residue polypeptide: Na(+)-translocating NADH-quinone reductase subunit E (198 aa).

6 consecutive transmembrane segments (helical) span residues 11–31, 35–55, 77–97, 109–129, 140–160, and 176–196; these read AVFI…FLAV, VTTA…SVPA, FLNF…LEMI, LGIF…VSFM, IVYG…LASI, and LGIT…FSGV.

This sequence belongs to the NqrDE/RnfAE family. As to quaternary structure, composed of six subunits; NqrA, NqrB, NqrC, NqrD, NqrE and NqrF.

It is found in the cell inner membrane. The enzyme catalyses a ubiquinone + n Na(+)(in) + NADH + H(+) = a ubiquinol + n Na(+)(out) + NAD(+). NQR complex catalyzes the reduction of ubiquinone-1 to ubiquinol by two successive reactions, coupled with the transport of Na(+) ions from the cytoplasm to the periplasm. NqrA to NqrE are probably involved in the second step, the conversion of ubisemiquinone to ubiquinol. The sequence is that of Na(+)-translocating NADH-quinone reductase subunit E from Photorhabdus laumondii subsp. laumondii (strain DSM 15139 / CIP 105565 / TT01) (Photorhabdus luminescens subsp. laumondii).